The primary structure comprises 128 residues: Large ribosomal subunit protein uL22 (128 aa).

It belongs to the universal ribosomal protein uL22 family. As to quaternary structure, part of the 50S ribosomal subunit.

In terms of biological role, this protein binds specifically to 23S rRNA; its binding is stimulated by other ribosomal proteins, e.g. L4, L17, and L20. It is important during the early stages of 50S assembly. It makes multiple contacts with different domains of the 23S rRNA in the assembled 50S subunit and ribosome. Its function is as follows. The globular domain of the protein is located near the polypeptide exit tunnel on the outside of the subunit, while an extended beta-hairpin is found that lines the wall of the exit tunnel in the center of the 70S ribosome. The chain is Large ribosomal subunit protein uL22 from Prochlorococcus marinus (strain MIT 9312).